We begin with the raw amino-acid sequence, 862 residues long: Phosphofurin acidic cluster sorting protein 2 (862 aa).

3 disordered regions span residues 151–215, 263–436, and 658–713; these read HEDS…TTSM, LDVE…TRSQ, and SSAT…SQGV. A compositionally biased stretch (low complexity) spans 263–272; that stretch reads LDVENPSDSG. The segment covering 313 to 328 has biased composition (basic and acidic residues); the sequence is SHREPPSPADVPEKTR. The segment covering 332-344 has biased composition (polar residues); it reads GKQQLSDSVSDTV. A phosphoserine mark is found at serine 361, serine 387, serine 424, serine 662, and serine 665. Low complexity-rich tracts occupy residues 658–693 and 700–710; these read SSAT…KEAS and PSVSGGLSSPS.

Belongs to the PACS family. In terms of assembly, interacts with BID and PKD2. Interacts with SIRT1. Interacts with HDAC1. Interacts with TRPV1. Interacts with WDR37.

It localises to the endoplasmic reticulum. It is found in the mitochondrion. In terms of biological role, multifunctional sorting protein that controls the endoplasmic reticulum (ER)-mitochondria communication, including the apposition of mitochondria with the ER and ER homeostasis. In addition, in response to apoptotic inducer, translocates BIB to mitochondria, which initiates a sequence of events including the formation of mitochondrial truncated BID, the release of cytochrome c, the activation of caspase-3 thereby causing cell death. May also involved in ion channel trafficking, directing acidic cluster-containing ion channels to distinct subcellular compartments. This chain is Phosphofurin acidic cluster sorting protein 2 (Pacs2), found in Mus musculus (Mouse).